Consider the following 85-residue polypeptide: Toxin To6 (85 aa).

Residues 1–20 (MSIFPIILALLLIGLDEGEA) form the signal peptide. The 63-residue stretch at 21 to 83 (LDGYPLSKNN…EMYPGRLPCN (63 aa)) folds into the LCN-type CS-alpha/beta domain. 4 cysteine pairs are disulfide-bonded: Cys-32/Cys-82, Cys-36/Cys-59, Cys-42/Cys-64, and Cys-46/Cys-66.

In terms of tissue distribution, expressed by the venom gland.

The protein resides in the secreted. Its function is as follows. Beta toxins bind voltage-independently at site-4 of sodium channels (Nav) and shift the voltage of activation toward more negative potentials thereby affecting sodium channel activation and promoting spontaneous and repetitive firing. The polypeptide is Toxin To6 (Tityus obscurus (Amazonian scorpion)).